Reading from the N-terminus, the 345-residue chain is Cytoskeleton protein RodZ (345 aa).

Residues Met-1–Gly-111 are Cytoplasmic-facing. Residues Leu-19–Leu-79 enclose the HTH cro/C1-type domain. Residues Gln-30–Glu-49 constitute a DNA-binding region (H-T-H motif). The chain crosses the membrane as a helical; Signal-anchor for type II membrane protein span at residues Trp-112–Trp-132. At Trp-133 to Glu-345 the chain is on the periplasmic side. The segment at Ser-151–Ser-259 is disordered. Over residues Pro-188–His-225 the composition is skewed to polar residues. A compositionally biased stretch (low complexity) spans Ala-229–Gln-241.

Belongs to the RodZ family.

It is found in the cell inner membrane. Cytoskeletal protein that is involved in cell-shape control through regulation of the length of the long axis. This chain is Cytoskeleton protein RodZ, found in Yersinia pestis bv. Antiqua (strain Antiqua).